An 890-amino-acid chain; its full sequence is Alanine--tRNA ligase (890 aa).

Positions 569, 573, 671, and 675 each coordinate Zn(2+).

The protein belongs to the class-II aminoacyl-tRNA synthetase family. It depends on Zn(2+) as a cofactor.

It localises to the cytoplasm. The catalysed reaction is tRNA(Ala) + L-alanine + ATP = L-alanyl-tRNA(Ala) + AMP + diphosphate. Functionally, catalyzes the attachment of alanine to tRNA(Ala) in a two-step reaction: alanine is first activated by ATP to form Ala-AMP and then transferred to the acceptor end of tRNA(Ala). Also edits incorrectly charged Ser-tRNA(Ala) and Gly-tRNA(Ala) via its editing domain. The polypeptide is Alanine--tRNA ligase (Synechococcus sp. (strain CC9902)).